Reading from the N-terminus, the 249-residue chain is MIT domain-containing protein 1 (249 aa).

The MIT domain occupies 8–86 (QDSDSTAAVA…KYLDQEKEDG (79 aa)). Positions 168 to 231 (SGLEEIKQSL…SLGYYDLDLR (64 aa)) are important for association with membranes.

Homodimer. Interacts (via MIT domain) with CHMP1A, CHMP1B, CHMP2A and IST1.

Its subcellular location is the late endosome membrane. The protein resides in the midbody. It localises to the membrane. Its function is as follows. Required for efficient abscission at the end of cytokinesis, together with components of the ESCRT-III complex. In Mus musculus (Mouse), this protein is MIT domain-containing protein 1 (Mitd1).